Reading from the N-terminus, the 123-residue chain is Ribosome-binding factor A (123 aa).

The protein belongs to the RbfA family. In terms of assembly, monomer. Binds 30S ribosomal subunits, but not 50S ribosomal subunits or 70S ribosomes.

It is found in the cytoplasm. Its function is as follows. One of several proteins that assist in the late maturation steps of the functional core of the 30S ribosomal subunit. Associates with free 30S ribosomal subunits (but not with 30S subunits that are part of 70S ribosomes or polysomes). Required for efficient processing of 16S rRNA. May interact with the 5'-terminal helix region of 16S rRNA. This is Ribosome-binding factor A from Magnetococcus marinus (strain ATCC BAA-1437 / JCM 17883 / MC-1).